Reading from the N-terminus, the 452-residue chain is Probable phosphoglucosamine mutase (452 aa).

The active-site Phosphoserine intermediate is the Ser-96. Positions 96, 233, 235, and 237 each coordinate Mg(2+). A Phosphoserine modification is found at Ser-96.

Belongs to the phosphohexose mutase family. The cofactor is Mg(2+). In terms of processing, activated by phosphorylation.

It catalyses the reaction alpha-D-glucosamine 1-phosphate = D-glucosamine 6-phosphate. Functionally, catalyzes the conversion of glucosamine-6-phosphate to glucosamine-1-phosphate. The sequence is that of Probable phosphoglucosamine mutase from Pyrococcus furiosus (strain ATCC 43587 / DSM 3638 / JCM 8422 / Vc1).